A 757-amino-acid polypeptide reads, in one-letter code: Ecdysone receptor (757 aa).

Residues 1 to 300 (MMKRRWSNNG…GPAPRLQEEL (300 aa)) are modulating. 2 disordered regions span residues 126 to 192 (NSVG…GGGG) and 235 to 289 (LNHH…KKIK). Over residues 128–138 (VGGGGGGGGVP) the composition is skewed to gly residues. Positions 167-183 (NSNSNHSNSSSHHTNGH) are enriched in low complexity. NR C4-type zinc fingers lie at residues 301 to 321 (CLVCGDRASGYHYNALTCEGC) and 337 to 361 (CKFGHACEMDMYMRRKCQECRLKKC). A DNA-binding region (nuclear receptor) is located at residues 301–373 (CLVCGDRASG…VGMRPECVVP (73 aa)). In terms of domain architecture, NR LBD spans 442–677 (NQLAVIYKLI…FLEEIWDVHA (236 aa)). Residues 717 to 734 (TSMATSSSSSLSPSAAST) show a composition bias toward low complexity. Positions 717 to 739 (TSMATSSSSSLSPSAASTPNGGA) are disordered.

This sequence belongs to the nuclear hormone receptor family. NR1 subfamily.

It localises to the nucleus. Receptor for ecdysone. Binds to ecdysone response elements (ECRES). This Lucilia cuprina (Green bottle fly) protein is Ecdysone receptor (EcR).